We begin with the raw amino-acid sequence, 2766 residues long: PDZ domain-containing protein 2 (2766 aa).

The PDZ 1 domain maps to leucine 85–arginine 177. Disordered stretches follow at residues glycine 189–lysine 315 and methionine 419–serine 452. A compositionally biased stretch (acidic residues) spans threonine 242–alanine 254. Residues histidine 280–lysine 296 show a composition bias toward basic and acidic residues. The 86-residue stretch at lysine 334 to methionine 419 folds into the PDZ 2 domain. Serine 517 is modified (phosphoserine). One can recognise a PDZ 3 domain in the interval isoleucine 535 to lysine 621. Over residues leucine 627 to methionine 636 the composition is skewed to polar residues. Residues leucine 627 to lysine 673 form a disordered region. The segment covering serine 637–glycine 650 has biased composition (low complexity). The region spanning glutamate 679–histidine 764 is the PDZ 4 domain. The span at tyrosine 783–glycine 794 shows a compositional bias: polar residues. Disordered regions lie at residues tyrosine 783–serine 803 and alanine 834–serine 853. Phosphoserine occurs at positions 891 and 895. 10 disordered regions span residues asparagine 915–glutamate 966, histidine 990–leucine 1425, isoleucine 1456–threonine 1531, aspartate 1725–glutamine 1909, aspartate 1924–serine 1967, glutamate 2015–valine 2070, phenylalanine 2146–glycine 2174, aspartate 2262–threonine 2397, glutamine 2424–aspartate 2450, and threonine 2465–proline 2496. Residues serine 918–glycine 927 show a composition bias toward acidic residues. The span at glycine 1021 to valine 1038 shows a compositional bias: basic and acidic residues. Composition is skewed to polar residues over residues threonine 1040–leucine 1061, proline 1126–proline 1137, and serine 1189–isoleucine 1220. Composition is skewed to low complexity over residues serine 1379–alanine 1393 and isoleucine 1456–serine 1471. Serine 1767 bears the Phosphoserine mark. The span at cysteine 1797–serine 1806 shows a compositional bias: basic residues. A compositionally biased stretch (polar residues) spans leucine 1884–threonine 1901. Low complexity-rich tracts occupy residues aspartate 1924 to glycine 1937 and serine 1947 to glycine 1963. 2 stretches are compositionally biased toward low complexity: residues proline 2280–serine 2296 and arginine 2305–leucine 2321. Composition is skewed to polar residues over residues proline 2322 to glycine 2347 and proline 2362 to serine 2372. Positions phenylalanine 2550 to lysine 2634 constitute a PDZ 5 domain. A disordered region spans residues glycine 2635–alanine 2667. In terms of domain architecture, PDZ 6 spans cysteine 2678 to histidine 2763.

In terms of assembly, interacts with SCN10A, CTNND2 and PKP4. In terms of processing, a secreted form is produced by caspase-mediated proteolytic cleavage. As to expression, expressed in the heart, liver, brain, spleen, lung, kidney, testis and skeletal muscle.

It is found in the nucleus. Its subcellular location is the cytoplasm. It localises to the endoplasmic reticulum. The protein localises to the cell junction. The protein resides in the secreted. This chain is PDZ domain-containing protein 2 (Pdzd2), found in Rattus norvegicus (Rat).